The following is a 225-amino-acid chain: MVLVKKYFLQRSMTKVMVDEYLAKQFYNAEYAGVEIVKTPIGTRVIIYAGRPALIIGKGGKTIKQLAQMLERYFGLDNPQITVTSVENPELNARVMAFRLAIALEKGYHFRRAAFITIRRIMNAGALGAEVIISGKLTSERAKYEKLKEGVVYKSGAFLDKIVDRAVAIAMLKPGVYGVEILITKPMKSVDKIELREQPKGPGENMVTVTNVSFIEESQKSGEQK.

The KH type-2 domain occupies 18 to 87; sequence VDEYLAKQFY…NPQITVTSVE (70 aa).

Belongs to the universal ribosomal protein uS3 family. In terms of assembly, part of the 30S ribosomal subunit.

Functionally, binds the lower part of the 30S subunit head. This chain is Small ribosomal subunit protein uS3, found in Sulfurisphaera tokodaii (strain DSM 16993 / JCM 10545 / NBRC 100140 / 7) (Sulfolobus tokodaii).